We begin with the raw amino-acid sequence, 312 residues long: Olfactory receptor 2L3 (312 aa).

Residues 1–24 (MENYNQTSTDFILLGFFPPSRIGL) lie on the Extracellular side of the membrane. An N-linked (GlcNAc...) asparagine glycan is attached at N5. The chain crosses the membrane as a helical span at residues 25–48 (FLFILIVFIFLMALIGNLSMILLI). The Cytoplasmic portion of the chain corresponds to 49–56 (FLDTHLHT). The chain crosses the membrane as a helical span at residues 57–78 (PMYFLLSQLSLIDLNYISTIVP). Over 79-99 (KMASDFLSGNKSISFTGCGIQ) the chain is Extracellular. Residue N88 is glycosylated (N-linked (GlcNAc...) asparagine). A disulfide bridge links C96 with C188. The helical transmembrane segment at 100 to 119 (SFFFSALGGAEALLLASMAY) threads the bilayer. At 120 to 138 (DRYIAICFPLHYPIRMSKR) the chain is on the cytoplasmic side. Residues 139 to 157 (MCVLMITGSWIIGSINACA) traverse the membrane as a helical segment. Residues 158–194 (HTVYVLHIPYCQSRAINHFFCDVPAMVTLACMDTWVY) lie on the Extracellular side of the membrane. A helical membrane pass occupies residues 195–218 (EGTVFLSTTIFLVFPFIAISCSYG). The Cytoplasmic portion of the chain corresponds to 219 to 235 (RVLLAVYHMKSAEGRKK). Residues 236-258 (AYLTCSTHLTVVTFYYAPFVYTY) form a helical membrane-spanning segment. Topologically, residues 259-271 (LRPRSLRSPTEDK) are extracellular. A helical transmembrane segment spans residues 272-291 (VLAVFYTTLTPMLNPIIYSL). Residues 292 to 312 (RNKEVMGALTRVSQRICSGKM) lie on the Cytoplasmic side of the membrane.

The protein belongs to the G-protein coupled receptor 1 family.

The protein resides in the cell membrane. Its function is as follows. Odorant receptor. The polypeptide is Olfactory receptor 2L3 (OR2L3) (Homo sapiens (Human)).